The sequence spans 775 residues: Acetamidase regulatory protein (775 aa).

Residues 1–15 (MSSTAHNSQPSTGNG) are compositionally biased toward polar residues. The disordered stretch occupies residues 1–20 (MSSTAHNSQPSTGNGVTKRK). The segment at residues 26-59 (CIHCHRRKVRCDARIVGLPCSNCRSAGKADCRIH) is a DNA-binding region (zn(2)-C6 fungal-type). Residues 126–153 (PHSSYTNGNHLSNNRGSQPITETQTFTR) are compositionally biased toward polar residues. Disordered regions lie at residues 126 to 159 (PHSSYTNGNHLSNNRGSQPITETQTFTRQPGADR) and 630 to 699 (ATSE…HQNQ). Residues 630-644 (ATSERPRRFSTHDQN) show a composition bias toward basic and acidic residues. Pro residues predominate over residues 674 to 689 (PRPPYEVPTPESPRMP).

The protein resides in the nucleus. Functionally, positively regulates the expression of genes involved in the catabolism of certain amides, omega amino acids, and lactams. In Aspergillus oryzae (strain ATCC 42149 / RIB 40) (Yellow koji mold), this protein is Acetamidase regulatory protein (amdR).